The sequence spans 284 residues: D-tagatose-1,6-bisphosphate aldolase subunit GatY (284 aa).

Aspartate 82 functions as the Proton donor in the catalytic mechanism. 2 residues coordinate Zn(2+): histidine 83 and histidine 180. Glycine 181 is a binding site for dihydroxyacetone phosphate. Histidine 208 contacts Zn(2+). Residues 209-211 (GAS) and 230-233 (NVAT) contribute to the dihydroxyacetone phosphate site.

Belongs to the class II fructose-bisphosphate aldolase family. TagBP aldolase GatY subfamily. In terms of assembly, forms a complex with GatZ. Zn(2+) is required as a cofactor.

The enzyme catalyses D-tagatofuranose 1,6-bisphosphate = D-glyceraldehyde 3-phosphate + dihydroxyacetone phosphate. It participates in carbohydrate metabolism; D-tagatose 6-phosphate degradation; D-glyceraldehyde 3-phosphate and glycerone phosphate from D-tagatose 6-phosphate: step 2/2. In terms of biological role, catalytic subunit of the tagatose-1,6-bisphosphate aldolase GatYZ, which catalyzes the reversible aldol condensation of dihydroxyacetone phosphate (DHAP or glycerone-phosphate) with glyceraldehyde 3-phosphate (G3P) to produce tagatose 1,6-bisphosphate (TBP). Requires GatZ subunit for full activity and stability. Is involved in the catabolism of galactitol. The polypeptide is D-tagatose-1,6-bisphosphate aldolase subunit GatY (Escherichia coli O8 (strain IAI1)).